Here is a 1210-residue protein sequence, read N- to C-terminus: ATPase family AAA domain-containing protein At1g05910 (1210 aa).

A compositionally biased stretch (polar residues) spans 1-11 (MHPKRSSQGDG). 2 disordered regions span residues 1–32 (MHPKRSSQGDGSVTKPVRTSDRLRRRPKLHGR) and 63–291 (LHKG…RTDD). Acidic residues predominate over residues 97–109 (DYTDSSGAEDEDM). A compositionally biased stretch (basic and acidic residues) spans 130–146 (SRKDMDAELAPRREGLR). Residues 167 to 226 (DTSEEKDGQDETENGNELDDADDGENEVEAEDEGNGEDEGDGEDEGEEDGDDDEEGDEEQ) show a composition bias toward acidic residues. Basic and acidic residues predominate over residues 227–244 (EGRKRYDLRNRAEVRRMP). Residues 276-286 (GGSRPHKRHRF) are compositionally biased toward basic residues. ATP is bound at residue 422 to 429 (GPPGTGKT). The disordered stretch occupies residues 856-883 (LNGKPDGPQPLPELPKVPKEPTGPKPAE). Positions 897–1000 (RLRMCLRDVC…DVVHGMLSQM (104 aa)) constitute a Bromo domain. Basic and acidic residues predominate over residues 1057–1070 (DRDYEGLKKPKKTT). Residues 1057-1151 (DRDYEGLKKP…EISSRTESVK (95 aa)) form a disordered region. Residues 1080-1090 (DKSQNQDSGQE) show a composition bias toward polar residues. Basic and acidic residues-rich tracts occupy residues 1108-1123 (DGDREDQSEPPSKEAS) and 1138-1151 (KSDKEISSRTESVK).

This sequence belongs to the AAA ATPase family.

The protein is ATPase family AAA domain-containing protein At1g05910 of Arabidopsis thaliana (Mouse-ear cress).